The chain runs to 333 residues: Cytosolic Fe-S cluster assembly factor NBP35 (333 aa).

The [4Fe-4S] cluster site is built by cysteine 32, cysteine 46, cysteine 49, and cysteine 55. Residue glycine 85 to serine 92 participates in ATP binding. 2 residues coordinate [4Fe-4S] cluster: cysteine 258 and cysteine 261.

Belongs to the Mrp/NBP35 ATP-binding proteins family. NUBP1/NBP35 subfamily. In terms of assembly, heterotetramer of 2 NBP35 and 2 CFD1 chains. It depends on [4Fe-4S] cluster as a cofactor.

It localises to the cytoplasm. Its subcellular location is the nucleus. Its function is as follows. Component of the cytosolic iron-sulfur (Fe/S) protein assembly (CIA) machinery. Required for maturation of extramitochondrial Fe-S proteins. The NBP35-CFD1 heterotetramer forms a Fe-S scaffold complex, mediating the de novo assembly of an Fe-S cluster and its transfer to target apoproteins. Required for biogenesis and export of both ribosomal subunits, which may reflect a role in assembly of the Fe/S clusters in RLI1, a protein which performs rRNA processing and ribosome export. The sequence is that of Cytosolic Fe-S cluster assembly factor NBP35 from Eremothecium gossypii (strain ATCC 10895 / CBS 109.51 / FGSC 9923 / NRRL Y-1056) (Yeast).